The following is a 172-amino-acid chain: uncharacterized protein (172 aa).

The next 4 helical transmembrane spans lie at 46-66 (MFSIIFSFLYLLLIVPLFLYP), 76-96 (LLSLFYCAYVMYFLPLEVGLF), 104-124 (WKFLFILNIGVTALITVLGWS), and 129-149 (FFYAFLNIRTLVCGITIFTEI).

The protein localises to the endoplasmic reticulum membrane. This is an uncharacterized protein from Schizosaccharomyces pombe (strain 972 / ATCC 24843) (Fission yeast).